A 647-amino-acid chain; its full sequence is Acetyl-coenzyme A synthetase (647 aa).

Residues 190 to 193 (RGGK), T310, and N334 contribute to the CoA site. Residues 386–388 (GEP), 410–415 (DTWWQT), D499, and R514 each bind ATP. S522 provides a ligand contact to CoA. R525 provides a ligand contact to ATP. Residues V536, H538, and V541 each coordinate Mg(2+). R583 contacts CoA. K608 carries the post-translational modification N6-acetyllysine.

It belongs to the ATP-dependent AMP-binding enzyme family. It depends on Mg(2+) as a cofactor. In terms of processing, acetylated. Deacetylation by the SIR2-homolog deacetylase activates the enzyme.

It catalyses the reaction acetate + ATP + CoA = acetyl-CoA + AMP + diphosphate. Its function is as follows. Catalyzes the conversion of acetate into acetyl-CoA (AcCoA), an essential intermediate at the junction of anabolic and catabolic pathways. AcsA undergoes a two-step reaction. In the first half reaction, AcsA combines acetate with ATP to form acetyl-adenylate (AcAMP) intermediate. In the second half reaction, it can then transfer the acetyl group from AcAMP to the sulfhydryl group of CoA, forming the product AcCoA. This Xanthomonas oryzae pv. oryzae (strain MAFF 311018) protein is Acetyl-coenzyme A synthetase.